We begin with the raw amino-acid sequence, 74 residues long: Putative membrane protein insertion efficiency factor (74 aa).

Belongs to the UPF0161 family.

The protein localises to the cell inner membrane. Functionally, could be involved in insertion of integral membrane proteins into the membrane. The protein is Putative membrane protein insertion efficiency factor of Leptospira interrogans serogroup Icterohaemorrhagiae serovar copenhageni (strain Fiocruz L1-130).